Here is a 296-residue protein sequence, read N- to C-terminus: Glycine--tRNA ligase alpha subunit (296 aa).

The protein belongs to the class-II aminoacyl-tRNA synthetase family. In terms of assembly, tetramer of two alpha and two beta subunits.

Its subcellular location is the cytoplasm. The catalysed reaction is tRNA(Gly) + glycine + ATP = glycyl-tRNA(Gly) + AMP + diphosphate. This Synechococcus sp. (strain WH7803) protein is Glycine--tRNA ligase alpha subunit.